A 505-amino-acid chain; its full sequence is Calcium/calmodulin-dependent protein kinase kinase 1 (505 aa).

Residues 26–61 are disordered; it reads THLEEADGGPEPTRNGVDPPPRARAASVIPGSTSRL. Phosphoserine occurs at positions 67 and 74. Asymmetric dimethylarginine is present on Arg-78. Ser-100 carries the phosphoserine modification. Thr-108 is modified (phosphothreonine). The Protein kinase domain occupies 128-409; sequence YKLQSEIGKG…VPDIKLHPWV (282 aa). ATP contacts are provided by residues 134–142 and Lys-157; that span reads IGKGAYGVV. The RP domain stretch occupies residues 167–189; it reads QYGFPRRPPPRGSQAAQGGPAKQ. The Proton acceptor role is filled by Asp-275. Residues 435–440 are autoinhibitory domain; that stretch reads KNSVRL. The segment at 438-463 is calmodulin-binding; that stretch reads VRLIPSWTTVILVKSMLRKRSFGNPF. Ser-458, Ser-475, and Ser-492 each carry phosphoserine. Positions 460 to 505 are disordered; sequence GNPFEPQARREERSMSAPGNLLVKEGFGEGGKSPELPGVQEDEAAS.

It belongs to the protein kinase superfamily. Ser/Thr protein kinase family. Interacts with CAMK4 and calmodulin. Post-translationally, appears to be autophosphorylated in a Ca(2+)/calmodulin-dependent manner. Phosphorylated at multiple sites by PRCAKA/PKA. Phosphorylation of Ser-458 is blocked upon binding to Ca(2+)/calmodulin. In vitro, phosphorylated by CAMK1 and CAMK4.

The protein resides in the cytoplasm. Its subcellular location is the nucleus. The enzyme catalyses L-seryl-[protein] + ATP = O-phospho-L-seryl-[protein] + ADP + H(+). It catalyses the reaction L-threonyl-[protein] + ATP = O-phospho-L-threonyl-[protein] + ADP + H(+). Its activity is regulated as follows. Activated by Ca(2+)/calmodulin. Binding of calmodulin may relieve intrasteric autoinhibition. Partially inhibited upon phosphorylation by PRCAKA/PKA. May be regulated through phosphorylation by CAMK1 and CAMK4. Functionally, calcium/calmodulin-dependent protein kinase that belongs to a proposed calcium-triggered signaling cascade involved in a number of cellular processes. Phosphorylates CAMK1, CAMK1D, CAMK1G and CAMK4. Involved in regulating cell apoptosis. Promotes cell survival by phosphorylating AKT1/PKB that inhibits pro-apoptotic BAD/Bcl2-antagonist of cell death. This is Calcium/calmodulin-dependent protein kinase kinase 1 (CAMKK1) from Homo sapiens (Human).